We begin with the raw amino-acid sequence, 293 residues long: Elongation factor Ts (293 aa).

The involved in Mg(2+) ion dislocation from EF-Tu stretch occupies residues 80–83; sequence TDFV.

Belongs to the EF-Ts family.

It is found in the cytoplasm. Its function is as follows. Associates with the EF-Tu.GDP complex and induces the exchange of GDP to GTP. It remains bound to the aminoacyl-tRNA.EF-Tu.GTP complex up to the GTP hydrolysis stage on the ribosome. This is Elongation factor Ts from Aeromonas salmonicida (strain A449).